Reading from the N-terminus, the 211-residue chain is Nucleoside diphosphate kinase homolog 5 (211 aa).

The NDK stretch occupies residues 13-145; sequence EKTLALIKPD…EREIRFMFPA (133 aa).

Belongs to the NDK family. As to quaternary structure, component of the axonemal radial spoke complex 1 (RS1), at least composed of spoke head proteins RSPH1, RSPH3, RSPH9 and the cilia-specific component RSPH4A or sperm-specific component RSPH6A, spoke stalk proteins RSPH14, DNAJB13, DYDC1, ROPN1L and NME5, and the anchor protein IQUB. Interacts with IQUB. As to expression, expressed in the trachea, ependymal cells and oviduct (at protein level). Expressed predominantly in germ cells of the testis. Not expressed in testicular somatic cells.

It is found in the cell projection. The protein resides in the cilium. Its subcellular location is the cytoplasm. It localises to the cytoskeleton. The protein localises to the flagellum axoneme. In terms of biological role, functions as part of axonemal radial spoke complexes that play an important part in the motility of sperm and cilia. Does not seem to have nucleoside diphosphate kinase (NDPK) activity. Confers protection from cell death by BAX and alters the cellular levels of several antioxidant enzymes including GPX5. May play a role in spermiogenesis by increasing the ability of late-stage spermatids to eliminate reactive oxygen species. This Mus musculus (Mouse) protein is Nucleoside diphosphate kinase homolog 5 (Nme5).